A 606-amino-acid polypeptide reads, in one-letter code: MKVRSAGSDRDVLCVTEEDLAGEDEDMPSFPCTQEGRAGPRCNRCQKNLSLHTSVRILYLFLTLLLVAVAVLASLVFRKVDSLSEDISLAQSIYNKKLVSMQENLQGLDPKALINCSFCREAEQLGQEIRKVQEELEGLQKMLLAQEVQLDQTSQTHELLSTRSSQISQEMGSCSFSIHQVNQSLGLFLAQVRGWQATTAGMDITLKDLTQECYDVKAAVHQINFTVGQTAEWIHGIQRKTDEETLTLQKIVTDWQNYTRLFGGLRTTSAKTGEIVKTIQTTLGASSQRISQNSESMHDLVLQVMGLQLQLDNISSFLDDHEENMHDLQYHTRYAQNRTVERFESLEGRMASHEIEIGTIFTNINATDNHVHSMLKYLDDVRLSCTLGFHTHAEELYYLNKSVSLMLGTTDLLRERFSLLSARLDFNVRNLSMIMEEMKAVDTHHGEILRNVTVIRGVPGPPGPRGLKGDTGVKGPVGSRGPKGDPGNLGPPGPQGPQGQPGEPGPVGERGPAGPRGFPGLKGSKGSFGTGGPRGQPGPKGDVGPLGPEGPPGSPGPSGPQGKPGISGKTGSPGQRGATGPKGEPGIQGPPGLPGPPGPPGNQSPY.

Topologically, residues 1–56 (MKVRSAGSDRDVLCVTEEDLAGEDEDMPSFPCTQEGRAGPRCNRCQKNLSLHTSVR) are cytoplasmic. Residues 57 to 77 (ILYLFLTLLLVAVAVLASLVF) traverse the membrane as a helical; Signal-anchor for type II membrane protein segment. Residues 78 to 606 (RKVDSLSEDI…PGPPGNQSPY (529 aa)) lie on the Extracellular side of the membrane. N-linked (GlcNAc...) asparagine glycosylation is found at asparagine 115, asparagine 182, asparagine 224, asparagine 257, asparagine 313, asparagine 337, asparagine 365, asparagine 400, asparagine 430, and asparagine 451. The disordered stretch occupies residues 455 to 606 (IRGVPGPPGP…PGPPGNQSPY (152 aa)). Collagen-like domains are found at residues 456-558 (RGVP…PGPS) and 559-601 (GPQG…GPPG). The span at 497–516 (PQGQPGEPGPVGERGPAGPR) shows a compositional bias: low complexity. Residues 526–535 (GSFGTGGPRG) are compositionally biased toward gly residues. 2 stretches are compositionally biased toward pro residues: residues 548 to 558 (PEGPPGSPGPS) and 591 to 606 (PGLP…QSPY).

It localises to the endoplasmic reticulum membrane. The protein localises to the golgi apparatus membrane. Its function is as follows. Seems to protect cells by scavenging oxidative molecules or harmful products of oxidation. The chain is Scavenger receptor class A member 3 (Scara3) from Mus musculus (Mouse).